Reading from the N-terminus, the 522-residue chain is Maturase K (522 aa).

This sequence belongs to the intron maturase 2 family. MatK subfamily.

Its subcellular location is the plastid. The protein resides in the chloroplast. Functionally, usually encoded in the trnK tRNA gene intron. Probably assists in splicing its own and other chloroplast group II introns. This chain is Maturase K, found in Iris orientalis (Yellowband iris).